We begin with the raw amino-acid sequence, 234 residues long: 5'-methylthioadenosine/S-adenosylhomocysteine nucleosidase (234 aa).

Residue Glu12 is the Proton acceptor of the active site. Substrate-binding positions include Gly78, Ile152, and 173–174 (ME). Asp197 functions as the Proton donor in the catalytic mechanism.

Belongs to the PNP/UDP phosphorylase family. MtnN subfamily.

The enzyme catalyses S-adenosyl-L-homocysteine + H2O = S-(5-deoxy-D-ribos-5-yl)-L-homocysteine + adenine. It catalyses the reaction S-methyl-5'-thioadenosine + H2O = 5-(methylsulfanyl)-D-ribose + adenine. The catalysed reaction is 5'-deoxyadenosine + H2O = 5-deoxy-D-ribose + adenine. Its pathway is amino-acid biosynthesis; L-methionine biosynthesis via salvage pathway; S-methyl-5-thio-alpha-D-ribose 1-phosphate from S-methyl-5'-thioadenosine (hydrolase route): step 1/2. In terms of biological role, catalyzes the irreversible cleavage of the glycosidic bond in both 5'-methylthioadenosine (MTA) and S-adenosylhomocysteine (SAH/AdoHcy) to adenine and the corresponding thioribose, 5'-methylthioribose and S-ribosylhomocysteine, respectively. Also cleaves 5'-deoxyadenosine, a toxic by-product of radical S-adenosylmethionine (SAM) enzymes, into 5-deoxyribose and adenine. This chain is 5'-methylthioadenosine/S-adenosylhomocysteine nucleosidase, found in Desulfotalea psychrophila (strain LSv54 / DSM 12343).